We begin with the raw amino-acid sequence, 283 residues long: MYLRRAVSKTLALPRRAPPGPAPLGKDASLRRMSSRKFPGTSGSNMIYYLVVGVTVSAGGYYTYKALTSKQVRRTEHVAEPKEQTKAELQPLPGEKEEHVAEAEQVCSEPGDTAVTEAESVDAEEVPEAAVVLPEESQASAPSEVPAEAAVVEASLSSSEPELKITEASLVETTESVPESTQEVESAAPDQDDVCNEGADTSQEGADTSQEGADTSQEGADTTKEEADNSKEAEGTTTEDPRSISEESAELEESPPLGSEPPAQPESQEEETQVTEETASPQG.

The interval 1–36 is disordered; the sequence is MYLRRAVSKTLALPRRAPPGPAPLGKDASLRRMSSR. Topologically, residues 1-41 are cytoplasmic; that stretch reads MYLRRAVSKTLALPRRAPPGPAPLGKDASLRRMSSRKFPGT. A helical; Anchor for type IV membrane protein membrane pass occupies residues 42-64; it reads SGSNMIYYLVVGVTVSAGGYYTY. Residues 65-283 are Mitochondrial intermembrane-facing; sequence KALTSKQVRR…VTEETASPQG (219 aa). Disordered stretches follow at residues 78–101 and 118–283; these read VAEPKEQTKAELQPLPGEKEEHVA and AESV…SPQG. Residues 128-160 are compositionally biased toward low complexity; the sequence is EAAVVLPEESQASAPSEVPAEAAVVEASLSSSE. 2 stretches are compositionally biased toward polar residues: residues 171 to 184 and 199 to 220; these read VETTESVPESTQEV and ADTSQEGADTSQEGADTSQEGA. The segment covering 221 to 245 has biased composition (basic and acidic residues); sequence DTTKEEADNSKEAEGTTTEDPRSIS.

In terms of assembly, interacts with RHOT1/Miro-1, RHOT2/Miro-2, TRAK1/OIP106 and TRAK2/GRIF1. Expressed in the ovary, testis, brain, adrenal glands and the compartments of the visual nervous system. Expressed in corneal endothelium (CE) (at protein level). Expressed in steroidogenic tissues with the highest level of expression observed in the adrenal gland. Weakly expressed in placenta. Weakly expressed in astrocytes and neurons under normoxia. Strongly expressed in astrocytes and neurons under hypoxia. Expressed in each layer of the retina, with particularly higher staining in the inner segment of the photoreceptor (IS), the outer plexiform layer (OPL) and the ganglion cell layer (GCL).

Its subcellular location is the mitochondrion. It localises to the mitochondrion outer membrane. The protein localises to the mitochondrion inner membrane. Plays a role in the trafficking of mitochondria along microtubules. Regulates the kinesin-mediated axonal transport of mitochondria to nerve terminals along microtubules during hypoxia. Participates in the translocation of TRAK2/GRIF1 from the cytoplasm to the mitochondrion. Also plays a role in steroidogenesis through maintenance of mitochondrial abundance and morphology. Plays an inhibitory role during neocortex development by regulating mitochondrial morphology, distribution and motility in neocortical neurons. This is Protein MGARP (Mgarp) from Mus musculus (Mouse).